The sequence spans 407 residues: Arginine biosynthesis bifunctional protein ArgJ (407 aa).

The substrate site is built by Thr-169, Lys-192, Thr-203, Glu-283, Asn-402, and Ser-407. Thr-203 acts as the Nucleophile in catalysis.

The protein belongs to the ArgJ family. Heterotetramer of two alpha and two beta chains.

It is found in the cytoplasm. The enzyme catalyses N(2)-acetyl-L-ornithine + L-glutamate = N-acetyl-L-glutamate + L-ornithine. The catalysed reaction is L-glutamate + acetyl-CoA = N-acetyl-L-glutamate + CoA + H(+). It functions in the pathway amino-acid biosynthesis; L-arginine biosynthesis; L-ornithine and N-acetyl-L-glutamate from L-glutamate and N(2)-acetyl-L-ornithine (cyclic): step 1/1. Its pathway is amino-acid biosynthesis; L-arginine biosynthesis; N(2)-acetyl-L-ornithine from L-glutamate: step 1/4. In terms of biological role, catalyzes two activities which are involved in the cyclic version of arginine biosynthesis: the synthesis of N-acetylglutamate from glutamate and acetyl-CoA as the acetyl donor, and of ornithine by transacetylation between N(2)-acetylornithine and glutamate. This is Arginine biosynthesis bifunctional protein ArgJ from Mycobacterium leprae (strain TN).